The chain runs to 190 residues: HTH-type transcriptional repressor CutR (190 aa).

The region spanning 3 to 58 is the HTH deoR-type domain; sequence PINRQQHILKWLKEEGSLRISDISARFGVSEMTVYRDVNQLVQSNQVIKTAGGITL. A DNA-binding region (H-T-H motif) is located at residues 20–39; it reads LRISDISARFGVSEMTVYRD.

The protein resides in the cytoplasm. In terms of biological role, may act as a negative transcriptional regulator of cutJ/ycnJ in the presence of copper. May use copper as a corepressor. In Bacillus subtilis (strain 168), this protein is HTH-type transcriptional repressor CutR.